A 265-amino-acid polypeptide reads, in one-letter code: 2-Cys peroxiredoxin BAS1, chloroplastic (265 aa).

A chloroplast-targeting transit peptide spans 1–65; it reads MACVASSTTL…SSTSRRSFAV (65 aa). In terms of domain architecture, Thioredoxin spans 73-232; the sequence is PLVGNKAPDF…TMRTLQALQY (160 aa). Residue cysteine 119 is the Cysteine sulfenic acid (-SOH) intermediate of the active site.

The protein belongs to the peroxiredoxin family. AhpC/Prx1 subfamily. Homodimer; disulfide-linked, upon oxidation.

It is found in the plastid. It localises to the chloroplast. It catalyses the reaction a hydroperoxide + [thioredoxin]-dithiol = an alcohol + [thioredoxin]-disulfide + H2O. Thiol-specific peroxidase that catalyzes the reduction of hydrogen peroxide and organic hydroperoxides to water and alcohols, respectively. Plays a role in cell protection against oxidative stress by detoxifying peroxides. May be an antioxidant enzyme particularly in the developing shoot and photosynthesizing leaf. In Spinacia oleracea (Spinach), this protein is 2-Cys peroxiredoxin BAS1, chloroplastic (BAS1).